A 248-amino-acid chain; its full sequence is Pyridoxine 5'-phosphate synthase (248 aa).

Residue Asn-12 participates in 3-amino-2-oxopropyl phosphate binding. Position 14–15 (14–15 (DH)) interacts with 1-deoxy-D-xylulose 5-phosphate. Residue Arg-23 coordinates 3-amino-2-oxopropyl phosphate. His-48 serves as the catalytic Proton acceptor. 2 residues coordinate 1-deoxy-D-xylulose 5-phosphate: Arg-50 and His-55. The active-site Proton acceptor is the Glu-75. Thr-105 contacts 1-deoxy-D-xylulose 5-phosphate. The active-site Proton donor is the His-196. Residues Gly-197 and 218 to 219 (GH) contribute to the 3-amino-2-oxopropyl phosphate site.

It belongs to the PNP synthase family. As to quaternary structure, homooctamer; tetramer of dimers.

The protein localises to the cytoplasm. The catalysed reaction is 3-amino-2-oxopropyl phosphate + 1-deoxy-D-xylulose 5-phosphate = pyridoxine 5'-phosphate + phosphate + 2 H2O + H(+). The protein operates within cofactor biosynthesis; pyridoxine 5'-phosphate biosynthesis; pyridoxine 5'-phosphate from D-erythrose 4-phosphate: step 5/5. Its function is as follows. Catalyzes the complicated ring closure reaction between the two acyclic compounds 1-deoxy-D-xylulose-5-phosphate (DXP) and 3-amino-2-oxopropyl phosphate (1-amino-acetone-3-phosphate or AAP) to form pyridoxine 5'-phosphate (PNP) and inorganic phosphate. The polypeptide is Pyridoxine 5'-phosphate synthase (Pseudomonas paraeruginosa (strain DSM 24068 / PA7) (Pseudomonas aeruginosa (strain PA7))).